A 115-amino-acid chain; its full sequence is MNFVLILMTNTLLALLLMIITFWLPQLNSYMEKSTPYECGFDPMSPARVPFSMKFFLVAITFLLFDLEIALLLPLPWALQTANLPLMVTSSLLLITILALSLAYEWLQKGLDWTE.

The next 3 membrane-spanning stretches (helical) occupy residues 3-23 (FVLI…ITFW), 55-75 (FFLV…LLPL), and 84-104 (LPLM…SLAY).

It belongs to the complex I subunit 3 family. In terms of assembly, core subunit of respiratory chain NADH dehydrogenase (Complex I) which is composed of 45 different subunits. Interacts with TMEM186. Interacts with TMEM242.

It localises to the mitochondrion inner membrane. It catalyses the reaction a ubiquinone + NADH + 5 H(+)(in) = a ubiquinol + NAD(+) + 4 H(+)(out). Functionally, core subunit of the mitochondrial membrane respiratory chain NADH dehydrogenase (Complex I) which catalyzes electron transfer from NADH through the respiratory chain, using ubiquinone as an electron acceptor. Essential for the catalytic activity of complex I. This is NADH-ubiquinone oxidoreductase chain 3 from Pan troglodytes (Chimpanzee).